The following is a 427-amino-acid chain: Adenylosuccinate synthetase (427 aa).

GTP-binding positions include 12–18 and 40–42; these read GDEGKGK and GHT. The active-site Proton acceptor is aspartate 13. Mg(2+) is bound by residues aspartate 13 and glycine 40. Residues 13-16, 38-41, threonine 130, arginine 144, glutamine 224, threonine 239, and arginine 303 each bind IMP; these read DEGK and NAGH. The active-site Proton donor is the histidine 41. Residue 299 to 305 coordinates substrate; sequence VTTGRAR. GTP-binding positions include arginine 305, 331–333, and 413–415; these read KID and SVG.

The protein belongs to the adenylosuccinate synthetase family. As to quaternary structure, homodimer. Requires Mg(2+) as cofactor.

The protein resides in the cytoplasm. The catalysed reaction is IMP + L-aspartate + GTP = N(6)-(1,2-dicarboxyethyl)-AMP + GDP + phosphate + 2 H(+). It functions in the pathway purine metabolism; AMP biosynthesis via de novo pathway; AMP from IMP: step 1/2. Plays an important role in the de novo pathway of purine nucleotide biosynthesis. Catalyzes the first committed step in the biosynthesis of AMP from IMP. This Clostridium novyi (strain NT) protein is Adenylosuccinate synthetase.